We begin with the raw amino-acid sequence, 305 residues long: Phosphatidylinositol:ceramide inositolphosphotransferase 2 (305 aa).

Helical transmembrane passes span 34–54 (LLAG…VHYI), 81–101 (ETVF…PFIL), 105–125 (KIYT…CQFL), 168–188 (VMYG…LVFV), 198–218 (RFIK…IIAS), and 221–241 (HYSV…FCLD). Residue histidine 180 is part of the active site. Active-site residues include histidine 221 and aspartate 225.

The protein belongs to the sphingomyelin synthase family. In terms of tissue distribution, expressed in leaves, roots, stems, flowers and siliques.

It localises to the golgi apparatus. The protein resides in the trans-Golgi network membrane. The enzyme catalyses an N-(2R-hydroxy-very-long-chain fatty acyl)-(R)-4-hydroxysphingoid base + a 1,2-diacyl-sn-glycero-3-phospho-(1D-myo-inositol) = a 1D-myo-inositol-1-phospho-N-[(R)-2-hydroxy-very-long-chain fatty acyl]-(R)-4-hydroxysphingoid base + a 1,2-diacyl-sn-glycerol. It functions in the pathway sphingolipid metabolism. Catalyzes the transfer of the phosphorylinositol group from phosphatidylinositol (PI) to phytoceramide, an essential step in sphingolipid biosynthesis. May play an important role in modulating plant programmed cell death (PCD) associated with defense (e.g. toward Golovinomyces cichoracearum) by promoting sphingolipid metabolism and thus regulating ceramide accumulation. The chain is Phosphatidylinositol:ceramide inositolphosphotransferase 2 from Arabidopsis thaliana (Mouse-ear cress).